A 465-amino-acid chain; its full sequence is UDP-N-acetylmuramate--L-alanine ligase (465 aa).

Position 114-120 (114-120 (GAHGKTT)) interacts with ATP.

The protein belongs to the MurCDEF family.

It is found in the cytoplasm. It carries out the reaction UDP-N-acetyl-alpha-D-muramate + L-alanine + ATP = UDP-N-acetyl-alpha-D-muramoyl-L-alanine + ADP + phosphate + H(+). It participates in cell wall biogenesis; peptidoglycan biosynthesis. In terms of biological role, cell wall formation. The sequence is that of UDP-N-acetylmuramate--L-alanine ligase from Syntrophomonas wolfei subsp. wolfei (strain DSM 2245B / Goettingen).